The chain runs to 461 residues: Na(+)/H(+) antiporter NhaA (461 aa).

The tract at residues 1 to 23 (MILSTQRLGRFMSPAPTPAPDAK) is disordered. The next 12 membrane-spanning stretches (helical) occupy residues 48-68 (VGGALLVAAAVIALIWANSPV), 89-109 (LSLGAWAADGLLAIFFFLVGL), 127-147 (IVPVAAAAGGVLVPALIYAAV), 157-177 (GWAIPTATDIAFAVAVLAIIG), 186-206 (IFLLTLAVVDDLIAISIIAFF), 211-231 (IQAAPLLLALIPLALYAFLAQ), 236-256 (FFGAHFMAAWAILLPLGIVTW), 257-277 (ALVHASGIHATVAGVLLGFAV), 305-325 (ISAGVAVPIFAFFSAGVAVGG), 339-359 (IGIIMALVLGKPIGIMGTTWI), 374-394 (WIDVFGVSLLAGIGFTVSLLV), and 408-428 (HAKVGILAASLLAAILATVVL).

This sequence belongs to the NhaA Na(+)/H(+) (TC 2.A.33) antiporter family.

Its subcellular location is the cell membrane. The enzyme catalyses Na(+)(in) + 2 H(+)(out) = Na(+)(out) + 2 H(+)(in). Na(+)/H(+) antiporter that extrudes sodium in exchange for external protons. This is Na(+)/H(+) antiporter NhaA from Arthrobacter sp. (strain FB24).